The sequence spans 199 residues: Riboflavin synthase (199 aa).

2 Lumazine-binding repeats span residues 1-95 (MFSG…IGGH) and 96-188 (FVSG…VDTI). 2,4-dihydroxypteridine-binding positions include 4-6 (GII), 46-48 (CLT), 60-65 (DVTEET), 99-101 (GHV), Lys-130, 139-141 (SLT), and 153-158 (SLIPET).

In terms of assembly, homotrimer.

The catalysed reaction is 2 6,7-dimethyl-8-(1-D-ribityl)lumazine + H(+) = 5-amino-6-(D-ribitylamino)uracil + riboflavin. It functions in the pathway cofactor biosynthesis; riboflavin biosynthesis; riboflavin from 2-hydroxy-3-oxobutyl phosphate and 5-amino-6-(D-ribitylamino)uracil: step 2/2. In terms of biological role, catalyzes the dismutation of two molecules of 6,7-dimethyl-8-ribityllumazine, resulting in the formation of riboflavin and 5-amino-6-(D-ribitylamino)uracil. The protein is Riboflavin synthase (ribE) of Chlamydia trachomatis serovar D (strain ATCC VR-885 / DSM 19411 / UW-3/Cx).